We begin with the raw amino-acid sequence, 304 residues long: DCN1-like protein 3 (304 aa).

Disordered stretches follow at residues 1-86 (MGQC…AEES) and 284-304 (EGEGRGALSSGPEGLCPEEQT). Gly-2 carries N-myristoyl glycine lipidation. The 193-residue stretch at 86 to 278 (SSLQRLEELF…LFDTFVEWEM (193 aa)) folds into the DCUN1 domain.

Part of a complex containing DCUN1D3, CUL3 and RBX1. Interacts (via the DCUN1 domain) with the unneddylated cullins: interacts with CUL1, CUL2, CUL3, CUL4A, CUL4B and CUL5; these interactions promote the cullin neddylation and the identity of the cullin dictates the affinity of the interaction. Interacts preferentially with CUL3; this interaction triggers the relocalization of CUL3 to the cell membrane where CUL3 is neddylated. Interacts (via DCUN1 domain) with RBX1. May also interact with regulators or subunits of cullin-RING ligases such as RNF7, ELOB and DDB1; these interactions are bridged by cullins. Interacts (via DCUN1 domain) with CAND1; this interaction is bridged by cullins and strongly inhibits cullin neddylation. These CAND-cullin-DCNL complexes can only be neddylated in the presence of a substrate adapter. Interacts (via DCUN1 domain) with the N-terminally acetylated form of UBE2M and UBE2F.

It localises to the cell membrane. Its subcellular location is the cytoplasm. The protein resides in the nucleus. It is found in the perinuclear region. Contributes to the neddylation of all cullins by transferring NEDD8 from N-terminally acetylated NEDD8-conjugating E2s enzyme to different cullin C-terminal domain-RBX complexes and may play a role in the cell cycle progression by regulating the SCF ubiquitin E3 ligase complex, after UV damage. At the cell membrane, can promote and as well inhibit cullins neddylation. This is DCN1-like protein 3 from Pongo abelii (Sumatran orangutan).